The sequence spans 324 residues: Adenine deaminase (324 aa).

Residues H11, H13, and H189 each contribute to the Zn(2+) site. Catalysis depends on E192, which acts as the Proton donor. D270 provides a ligand contact to Zn(2+). Residue D271 participates in substrate binding.

The protein belongs to the metallo-dependent hydrolases superfamily. Adenosine and AMP deaminases family. Adenine deaminase type 2 subfamily. Requires Zn(2+) as cofactor.

The enzyme catalyses adenine + H2O + H(+) = hypoxanthine + NH4(+). Catalyzes the hydrolytic deamination of adenine to hypoxanthine. Plays an important role in the purine salvage pathway and in nitrogen catabolism. This is Adenine deaminase from Sinorhizobium medicae (strain WSM419) (Ensifer medicae).